The primary structure comprises 75 residues: UPF0352 protein ESA_01049 (75 aa).

The protein belongs to the UPF0352 family.

The chain is UPF0352 protein ESA_01049 from Cronobacter sakazakii (strain ATCC BAA-894) (Enterobacter sakazakii).